The primary structure comprises 432 residues: Trigger factor (432 aa).

Residues 163 to 248 enclose the PPIase FKBP-type domain; that stretch reads GDIAVIDFEG…LKALNKKELP (86 aa).

The protein belongs to the FKBP-type PPIase family. Tig subfamily.

It is found in the cytoplasm. The enzyme catalyses [protein]-peptidylproline (omega=180) = [protein]-peptidylproline (omega=0). In terms of biological role, involved in protein export. Acts as a chaperone by maintaining the newly synthesized protein in an open conformation. Functions as a peptidyl-prolyl cis-trans isomerase. This chain is Trigger factor, found in Caldanaerobacter subterraneus subsp. tengcongensis (strain DSM 15242 / JCM 11007 / NBRC 100824 / MB4) (Thermoanaerobacter tengcongensis).